The chain runs to 108 residues: uncharacterized protein (108 aa).

An N-terminal signal peptide occupies residues 1-20 (MNLKSIIFVLFIAFFAFSLA). An N-linked (GlcNAc...) asparagine glycan is attached at asparagine 39.

The protein belongs to the Dictyostelium gerABC family.

It localises to the secreted. This is an uncharacterized protein from Dictyostelium discoideum (Social amoeba).